The chain runs to 412 residues: Acetylornithine aminotransferase (412 aa).

Residues 109-110 and phenylalanine 142 each bind pyridoxal 5'-phosphate; that span reads GA. Arginine 145 lines the N(2)-acetyl-L-ornithine pocket. 233–236 contacts pyridoxal 5'-phosphate; that stretch reads DEVQ. Lysine 262 carries the post-translational modification N6-(pyridoxal phosphate)lysine. Serine 289 lines the N(2)-acetyl-L-ornithine pocket. Threonine 290 contacts pyridoxal 5'-phosphate.

It belongs to the class-III pyridoxal-phosphate-dependent aminotransferase family. ArgD subfamily. As to quaternary structure, homodimer. Pyridoxal 5'-phosphate is required as a cofactor.

The protein resides in the cytoplasm. It carries out the reaction N(2)-acetyl-L-ornithine + 2-oxoglutarate = N-acetyl-L-glutamate 5-semialdehyde + L-glutamate. It participates in amino-acid biosynthesis; L-arginine biosynthesis; N(2)-acetyl-L-ornithine from L-glutamate: step 4/4. This is Acetylornithine aminotransferase from Thermosynechococcus vestitus (strain NIES-2133 / IAM M-273 / BP-1).